We begin with the raw amino-acid sequence, 296 residues long: Cytidine deaminase (296 aa).

CMP/dCMP-type deaminase domains follow at residues 47–167 (AESE…FGPS) and 186–296 (DSSD…LDPE). A substrate-binding site is contributed by 88-90 (NME). H101 serves as a coordination point for Zn(2+). The Proton donor role is filled by E103. C128 and C131 together coordinate Zn(2+).

It belongs to the cytidine and deoxycytidylate deaminase family. As to quaternary structure, homodimer. It depends on Zn(2+) as a cofactor.

It carries out the reaction cytidine + H2O + H(+) = uridine + NH4(+). The enzyme catalyses 2'-deoxycytidine + H2O + H(+) = 2'-deoxyuridine + NH4(+). In terms of biological role, this enzyme scavenges exogenous and endogenous cytidine and 2'-deoxycytidine for UMP synthesis. The sequence is that of Cytidine deaminase from Shewanella sediminis (strain HAW-EB3).